A 475-amino-acid polypeptide reads, in one-letter code: Gelsolin-like protein 1 (475 aa).

The segment at 1-131 (MGGTSLDPAL…GYRHVDDQFK (131 aa)) is actin binding, actin severing, Ca-sensitive. Residues 1 to 239 (MGGTSLDPAL…VRKVSKGKDD (239 aa)) form a necessary for barbed end capping activity region. A Gelsolin-like 1 repeat occupies 27-105 (FVLEPVPEVD…IQNYESPLFL (79 aa)). An actin-actin interfilament contact point region spans residues 70-73 (DEIG). A required for synapse elimination during development region spans residues 106–147 (SYFPDGIRYVSGGYESGYRHVDDQFKNWKPHLFHCKGKRNVR). The tract at residues 133–227 (WKPHLFHCKG…STFWSYFGGV (95 aa)) is required for phosphatidylinositol 4,5-bisphosphate binding and regulation. 3 Gelsolin-like repeats span residues 148 to 208 (CTEV…KVHI), 275 to 341 (RKEQ…STQF), and 375 to 447 (EIAN…PPTF). Positions 240-475 (DDNYWKRLTE…VQNMRRLLFH (236 aa)) are F- and G-actin binding, Ca-independent. Positions 248-348 (TEQITLWKVS…TQFTQWFRDW (101 aa)) are inhibitory for phosphatidylinositol 4,5-bisphosphate binding activity.

It belongs to the villin/gelsolin family. As to quaternary structure, monomer. Binds to actin monomers and filaments. Cleavage by caspase ced-3 activates its actin-severing function and is required for the elimination of presynaptic components during development.

It is found in the cytoplasm. The protein resides in the cytoskeleton. Functionally, calcium-regulated, actin-modulating protein that binds to the plus (or barbed) ends of actin monomers or filaments, preventing monomer exchange (end-blocking or capping). Binds actin but does not nucleate actin polymerization, albeit slows down elongation by blocking the barbed ends. By promoting actin depolymerization, required for the elimination of presynaptic components downstream of the egl-1, ced-4 and ced-3 apoptotic pathway during larval development. The protein is Gelsolin-like protein 1 of Caenorhabditis elegans.